Here is a 288-residue protein sequence, read N- to C-terminus: MENISNRDKALILNQALPYIQKYTGKTVVIKYGGSAMENPELKKKVMSDVALLSTVGINVIVVHGGGKDITAMLNKIGKESKFINGLRYTDSETAEVVKMVLAGKVNKDLVASLENCGGKCLGICGIDGKMFKVSKYKGDDDLGFVGDVDHVDTDLLNTIITNKYIPIVATIGCDDEGNVYNINADTAAARIAESLKAETLIYMTDTPGLLKDKDDENTLISQINIKDIDNLIKDGTISGGMIPKVKHCIDAVENGVSKVFIIDGRLCHSLLIEMFTDEGIGTMFHKD.

Residues 66–67 (GG), Arg-88, and Asn-182 contribute to the substrate site.

This sequence belongs to the acetylglutamate kinase family. ArgB subfamily.

It localises to the cytoplasm. It catalyses the reaction N-acetyl-L-glutamate + ATP = N-acetyl-L-glutamyl 5-phosphate + ADP. It participates in amino-acid biosynthesis; L-arginine biosynthesis; N(2)-acetyl-L-ornithine from L-glutamate: step 2/4. Its function is as follows. Catalyzes the ATP-dependent phosphorylation of N-acetyl-L-glutamate. The polypeptide is Acetylglutamate kinase (Brachyspira hyodysenteriae (strain ATCC 49526 / WA1)).